Consider the following 443-residue polypeptide: MSSQLPILTVSQLNRQVKGFLENEIGLVHVEGEISNLSKPSSGHYYFTLKDSTAQIRCAFFKNRHSSSLLRNFNDGQQIVASGKLSLYEARGEYQLIVEEIVEAGMGILYQRFEELKIKLAREGLFNPERKKTLPRIPETIGIITSPTGAAIQDILSTLARRFPIARIIIYPSEVQGQAAPQQLVNALKLANTHKRCQVLILARGGGSIEDLWAFNDEYLARQIAISEIPVVSGIGHETDFTIADFVADYRAETPTAAATAVTPNCIELFNILDTAIYRLHDAIIRLVKGLQLKLNHLIDKIASPRQTISTYWQTLDYLERQLISAMTQFINLNINKMNLFSTRLQANNPKTQIERTKIQLRQLILQLTQEIRIKVNQLKHQLSTNLSTLHAVSPLATLDRGYAIVSKNQRILFAAQQAQIGDTIDVRLAKGSLACEVTQIKD.

The protein belongs to the XseA family. As to quaternary structure, heterooligomer composed of large and small subunits.

The protein localises to the cytoplasm. The enzyme catalyses Exonucleolytic cleavage in either 5'- to 3'- or 3'- to 5'-direction to yield nucleoside 5'-phosphates.. In terms of biological role, bidirectionally degrades single-stranded DNA into large acid-insoluble oligonucleotides, which are then degraded further into small acid-soluble oligonucleotides. This chain is Exodeoxyribonuclease 7 large subunit, found in Legionella pneumophila (strain Lens).